A 96-amino-acid chain; its full sequence is DNA-directed RNA polymerase subunit Rpo11 (96 aa).

This sequence belongs to the archaeal Rpo11/eukaryotic RPB11/RPC19 RNA polymerase subunit family. Part of the RNA polymerase complex.

The protein localises to the cytoplasm. The enzyme catalyses RNA(n) + a ribonucleoside 5'-triphosphate = RNA(n+1) + diphosphate. DNA-dependent RNA polymerase (RNAP) catalyzes the transcription of DNA into RNA using the four ribonucleoside triphosphates as substrates. The protein is DNA-directed RNA polymerase subunit Rpo11 of Methanococcus maripaludis (strain C6 / ATCC BAA-1332).